Here is a 758-residue protein sequence, read N- to C-terminus: MAVSAGSARTSPSSDKVQKDKAELISGPRQDSRIGKLLGFEWTDLSSWRRLVTLLNRPTDPASLAVFRFLFGFLMVLDIPQERGLSSLDRKYLDGLDVCRFPLLDALRPLPLDWMYLVYTIMFLGALGMMLGLCYRISCVLFLLPYWYVFLLDKTSWNNHSYLYGLLAFQLTFMDANHYWSVDGLLNAHRRNAHVPLWNYAVLRGQIFIVYFIAGVKKLDADWVEGYSMEYLSRHWLFSPFKLLLSEELTSLLVVHWGGLLLDLSAGFLLFFDVSRSIGLFFVSYFHCMNSQLFSIGMFSYVMLASSPLFCSPEWPRKLVSYCPRRLQQLLPLKAAPQPSVSCVYKRSRGKSGQKPGLRHQLGAAFTLLYLLEQLFLPYSHFLTQGYNNWTNGLYGYSWDMMVHSRSHQHVKITYRDGRTGELGYLNPGVFTQSRRWKDHADMLKQYATCLSRLLPKYNVTEPQIYFDIWVSINDRFQQRIFDPRVDIVQAAWSPFQRTSWVQPLLMDLSPWRAKLQEIKSSLDNHTEVVFIADFPGLHLENFVSEDLGNTSIQLLQGEVTVELVAEQKNQTLREGEKMQLPAGEYHKVYTTSPSPSCYMYVYVNTTELALEQDLAYLQELKEKVENGSETGPLPPELQPLLEGEVKGGPEPTPLVQTFLRRQQRLQEIERRRNTPFHERFFRFLLRKLYVFRRSFLMTCISLRNLILGRPSLEQLAQEVTYANLRPFEAVGELNPSNTDSSHSNPPESNPDPVHSEF.

The interval 1–22 (MAVSAGSARTSPSSDKVQKDKA) is disordered. A2 carries the N-acetylalanine modification. Residues 2-60 (AVSAGSARTSPSSDKVQKDKAELISGPRQDSRIGKLLGFEWTDLSSWRRLVTLLNRPTD) lie on the Cytoplasmic side of the membrane. Residues 61-81 (PASLAVFRFLFGFLMVLDIPQ) traverse the membrane as a helical segment. Residues 82 to 113 (ERGLSSLDRKYLDGLDVCRFPLLDALRPLPLD) are Lumenal-facing. Residues C99 and C450 are joined by a disulfide bond. Residues 114 to 134 (WMYLVYTIMFLGALGMMLGLC) form a helical membrane-spanning segment. Topologically, residues 135 to 136 (YR) are cytoplasmic. Residues 137–157 (ISCVLFLLPYWYVFLLDKTSW) traverse the membrane as a helical segment. At 158-292 (NNHSYLYGLL…VSYFHCMNSQ (135 aa)) the chain is on the lumenal side. Residue K218 is the Proton acceptor of the active site. The chain crosses the membrane as a helical span at residues 293–313 (LFSIGMFSYVMLASSPLFCSP). Residues 314–361 (EWPRKLVSYCPRRLQQLLPLKAAPQPSVSCVYKRSRGKSGQKPGLRHQ) lie on the Cytoplasmic side of the membrane. The helical transmembrane segment at 362 to 382 (LGAAFTLLYLLEQLFLPYSHF) threads the bilayer. Residues 383–758 (LTQGYNNWTN…SNPDPVHSEF (376 aa)) are Lumenal-facing. N-linked (GlcNAc...) asparagine glycosylation is found at N459 and N550. Positions 732–758 (GELNPSNTDSSHSNPPESNPDPVHSEF) are disordered. Polar residues predominate over residues 735 to 747 (NPSNTDSSHSNPP).

It belongs to the vitamin K-dependent gamma-carboxylase family. As to quaternary structure, monomer. May interact with CALU.

The protein resides in the endoplasmic reticulum membrane. It carries out the reaction 4-carboxy-L-glutamyl-[protein] + 2,3-epoxyphylloquinone + H2O + H(+) = phylloquinol + L-glutamyl-[protein] + CO2 + O2. Mediates the vitamin K-dependent carboxylation of glutamate residues to calcium-binding gamma-carboxyglutamate (Gla) residues with the concomitant conversion of the reduced hydroquinone form of vitamin K to vitamin K epoxide. Catalyzes gamma-carboxylation of various proteins, such as blood coagulation factors (F2, F7, F9 and F10), osteocalcin (BGLAP) or matrix Gla protein (MGP). The protein is Vitamin K-dependent gamma-carboxylase (GGCX) of Homo sapiens (Human).